We begin with the raw amino-acid sequence, 1110 residues long: Brother of CDO (1110 aa).

Residues 1-25 form the signal peptide; it reads MTTCRRERPILTLLWILMATAGCLA. Over 26 to 850 the chain is Extracellular; that stretch reads DLNEVPQVTV…MVARASDLPY (825 aa). Ig-like C2-type domains lie at 31–118, 124–208, 229–310, and 318–402; these read PQVT…ATVT, DFKL…VKTS, PLEA…VILY, and PEVT…VQLR. 4 disulfide bridges follow: Cys52–Cys101, Cys145–Cys195, Cys247–Cys294, and Cys339–Cys386. N-linked (GlcNAc...) asparagine glycosylation is found at Asn60, Asn71, Asn93, Asn184, and Asn270. Positions 407-458 are disordered; that stretch reads DTTLRPGRDTKPIAATPPMPPSRPSRPDQMLREQPGLVKPPTSSVQPTSLKC. Positions 421–430 are enriched in pro residues; the sequence is ATPPMPPSRP. Fibronectin type-III domains are found at residues 469 to 566, 603 to 698, and 707 to 807; these read APII…GRRP, APDR…VVSG, and PVAG…TKAR. A glycan (N-linked (GlcNAc...) asparagine) is linked at Asn512. Positions 561–610 are disordered; it reads RTGRRPKPEIVASKEQQIQRDDPGASLQSSSQPDHGRLSPPEAPDRPTIS. N-linked (GlcNAc...) asparagine glycosylation is found at Asn720 and Asn754. The tract at residues 809-828 is disordered; it reads FSGQPGRPPPLTLAPPQPPP. Positions 814 to 828 are enriched in pro residues; it reads GRPPPLTLAPPQPPP. Residues 851–871 form a helical membrane-spanning segment; it reads LIVGVVLGSIVLIIVTFIPFC. At 872–1110 the chain is on the cytoplasmic side; it reads LWRAWSKQKH…VSFETPPPTI (239 aa). The segment at 1065–1110 is disordered; sequence SDSCQVGGGDWSSQHPSGTYTGQERGMRFSPSPSVHVSFETPPPTI. The span at 1075 to 1086 shows a compositional bias: polar residues; it reads WSSQHPSGTYTG.

In terms of assembly, part of a complex that contains BOC, CDON, NEO1, cadherins and CTNNB1. Interacts with SHH, DHH and IHH. Interacts with NTN3. Interacts with CDH2 and CTNNB1. Interacts with CDH15 only during the early stages of myoblast differentiation. Highly expressed in embryonic somites, limb buds, dermomyotomes and in the neural tube.

The protein resides in the membrane. In terms of biological role, component of a cell-surface receptor complex that mediates cell-cell interactions between muscle precursor cells. Promotes differentiation of myogenic cells. The chain is Brother of CDO (Boc) from Mus musculus (Mouse).